We begin with the raw amino-acid sequence, 719 residues long: Anaphase-promoting complex subunit 4 (719 aa).

The stretch at Asn-57–Asp-96 is one WD repeat.

In terms of assembly, the APC/C is composed of at least 13 subunits: apc1, apc2, nuc2, apc4, apc5, cut9, apc8, apc10, apc11, hcn1, apc13, apc14 and apc15. Interacts with apc1 and dim1.

In terms of biological role, component of the anaphase-promoting complex/cyclosome (APC/C), a cell cycle-regulated E3 ubiquitin-protein ligase complex that controls progression through mitosis and the G1 phase of the cell cycle. The APC/C is thought to confer substrate specificity and, in the presence of ubiquitin-conjugating E2 enzymes, it catalyzes the formation of protein-ubiquitin conjugates that are subsequently degraded by the 26S proteasome. Has a role in promoting metaphase to anaphase transition via the ubiquitination of specific mitotic substrates. The sequence is that of Anaphase-promoting complex subunit 4 (cut20) from Schizosaccharomyces pombe (strain 972 / ATCC 24843) (Fission yeast).